We begin with the raw amino-acid sequence, 524 residues long: Cytochrome P450 4F3 (524 aa).

Residues 15 to 35 (AASPWLLLLLVGASCLLAYIL) form a helical membrane-spanning segment. Cys-468 provides a ligand contact to heme.

The protein belongs to the cytochrome P450 family. Requires heme as cofactor.

Its subcellular location is the endoplasmic reticulum membrane. It localises to the microsome membrane. The enzyme catalyses leukotriene B4 + reduced [NADPH--hemoprotein reductase] + O2 = 18-hydroxy-leukotriene B4 + oxidized [NADPH--hemoprotein reductase] + H2O + H(+). It catalyses the reaction leukotriene B4 + reduced [NADPH--hemoprotein reductase] + O2 = 19-hydroxy-leukotriene B4 + oxidized [NADPH--hemoprotein reductase] + H2O + H(+). It participates in lipid metabolism; leukotriene B4 degradation. In terms of biological role, a cytochrome P450 monooxygenase involved in the metabolism of the pro-inflammatory lipid mediator leukotriene B4 (LTB4). Hydroxylates at the omega-1 and omega-2 positions LTB4. This oxidation step leads to LTB4 inactivation, which is postulated to be a crucial part of the resolution of inflammation. Mechanistically, uses molecular oxygen inserting one oxygen atom into a substrate, and reducing the second into a water molecule, with two electrons provided by NADPH via cytochrome P450 reductase (CPR; NADPH-ferrihemoprotein reductase). The sequence is that of Cytochrome P450 4F3 from Rattus norvegicus (Rat).